The chain runs to 548 residues: 4-methyl-5-nitrocatechol 5-monooxygenase (548 aa).

The protein belongs to the PheA/TfdB FAD monooxygenase family. As to quaternary structure, monomer. Requires FAD as cofactor.

The enzyme catalyses 4-methyl-5-nitrocatechol + NADPH + O2 = 2-hydroxy-5-methylquinone + nitrite + NADP(+) + H2O + H(+). It catalyses the reaction 4-methyl-5-nitrocatechol + NADH + O2 = 2-hydroxy-5-methylquinone + nitrite + NAD(+) + H2O + H(+). Activated by magnesium or manganese ions. Inhibited by concentrations of 4-methyl-5-nitrocatechol (MNC) above 2 mM. Its function is as follows. Involved in the degradation of 2,4-dinitrotoluene (2,4-DNT). Catalyzes the removal of the nitro group from 4-methyl-5-nitrocatechol (MNC) to yield 2-hydroxy-5-methylquinone. It can use both NADH and NADPH as electron donors, but prefers NADPH. Also able to use 4-nitrocatechol as substrate. This chain is 4-methyl-5-nitrocatechol 5-monooxygenase, found in Burkholderia sp.